We begin with the raw amino-acid sequence, 77 residues long: Translation initiation factor IF-1, chloroplastic (77 aa).

Residues 1 to 71 enclose the S1-like domain; sequence MKEQKLIHEG…TRGRIIYRLR (71 aa).

It belongs to the IF-1 family. In terms of assembly, component of the 30S ribosomal translation pre-initiation complex which assembles on the 30S ribosome in the order IF-2 and IF-3, IF-1 and N-formylmethionyl-tRNA(fMet); mRNA recruitment can occur at any time during PIC assembly.

The protein localises to the plastid. It localises to the chloroplast. Functionally, one of the essential components for the initiation of protein synthesis. Stabilizes the binding of IF-2 and IF-3 on the 30S subunit to which N-formylmethionyl-tRNA(fMet) subsequently binds. Helps modulate mRNA selection, yielding the 30S pre-initiation complex (PIC). Upon addition of the 50S ribosomal subunit IF-1, IF-2 and IF-3 are released leaving the mature 70S translation initiation complex. This is Translation initiation factor IF-1, chloroplastic from Asarum canadense (Wild ginger).